Consider the following 235-residue polypeptide: Biosynthetic peptidoglycan transglycosylase (235 aa).

The chain crosses the membrane as a helical span at residues Gly12–Ile34.

It belongs to the glycosyltransferase 51 family.

It localises to the cell inner membrane. The enzyme catalyses [GlcNAc-(1-&gt;4)-Mur2Ac(oyl-L-Ala-gamma-D-Glu-L-Lys-D-Ala-D-Ala)](n)-di-trans,octa-cis-undecaprenyl diphosphate + beta-D-GlcNAc-(1-&gt;4)-Mur2Ac(oyl-L-Ala-gamma-D-Glu-L-Lys-D-Ala-D-Ala)-di-trans,octa-cis-undecaprenyl diphosphate = [GlcNAc-(1-&gt;4)-Mur2Ac(oyl-L-Ala-gamma-D-Glu-L-Lys-D-Ala-D-Ala)](n+1)-di-trans,octa-cis-undecaprenyl diphosphate + di-trans,octa-cis-undecaprenyl diphosphate + H(+). It participates in cell wall biogenesis; peptidoglycan biosynthesis. In terms of biological role, peptidoglycan polymerase that catalyzes glycan chain elongation from lipid-linked precursors. The sequence is that of Biosynthetic peptidoglycan transglycosylase from Aeromonas hydrophila subsp. hydrophila (strain ATCC 7966 / DSM 30187 / BCRC 13018 / CCUG 14551 / JCM 1027 / KCTC 2358 / NCIMB 9240 / NCTC 8049).